The chain runs to 374 residues: 5-pentadecatrienyl resorcinol O-methyltransferase (374 aa).

4 residues coordinate S-adenosyl-L-methionine: Asp-239, Asp-261, Met-262, and Lys-275. His-279 acts as the Proton acceptor in catalysis.

It belongs to the class I-like SAM-binding methyltransferase superfamily. Cation-independent O-methyltransferase family. COMT subfamily. Homodimer. In terms of tissue distribution, expressed predominantly in root hairs.

It carries out the reaction (8Z,11Z)-5-(pentadeca-8,11,14-trien-1-yl)resorcinol + S-adenosyl-L-methionine = (8Z,11Z)-5-(pentadeca- 8,11,14-trien-1-yl)resorcinol-3-methyl ether + S-adenosyl-L-homocysteine + H(+). O-methyltransferase involved in the biosynthetic pathway of the phytotoxin sorgoleone, a potent broad-spectrum inhibitor active against many agronomically important monocot and dicot weed species. Substrate specificity for alkylresorcinols. Strong preference for a five carbons alkyl side chain. The chain is 5-pentadecatrienyl resorcinol O-methyltransferase (OMT3) from Sorghum bicolor (Sorghum).